The sequence spans 80 residues: Conotoxin VnMSGL-0121 (80 aa).

The first 20 residues, 1 to 20, serve as a signal peptide directing secretion; that stretch reads MSGLGIMVLTLLLLVSMATS. Residues 21-44 constitute a propeptide that is removed on maturation; the sequence is HQDGGGKQATQRDAINVRRRRSIT. 3 disulfides stabilise this stretch: C52–C65, C56–C74, and C64–C78. F79 carries the post-translational modification Phenylalanine amide.

Belongs to the conotoxin O3 superfamily. Expressed by the venom duct.

The protein localises to the secreted. The protein is Conotoxin VnMSGL-0121 of Conus ventricosus (Mediterranean cone).